The sequence spans 527 residues: UDP-glucuronosyltransferase 2A3 (527 aa).

An N-terminal signal peptide occupies residues 1–23 (MRSEKSALVFLLLQLFCVGCGFC). At 24 to 486 (GKVLVWPCDM…AAHNLTWFQH (463 aa)) the chain is on the extracellular side. Asn-313 carries an N-linked (GlcNAc...) asparagine glycan. A helical membrane pass occupies residues 487 to 507 (YSIDVIGFLLACVATAIFLFT). Over 508 to 523 (KCCLFSCQKFNKTRKI) the chain is Cytoplasmic.

Belongs to the UDP-glycosyltransferase family.

It localises to the membrane. The catalysed reaction is glucuronate acceptor + UDP-alpha-D-glucuronate = acceptor beta-D-glucuronoside + UDP + H(+). Functionally, UDP-glucuronosyltransferases catalyze phase II biotransformation reactions in which lipophilic substrates are conjugated with glucuronic acid to increase water solubility and enhance excretion. They are of major importance in the conjugation and subsequent elimination of potentially toxic xenobiotics and endogenous compounds. The polypeptide is UDP-glucuronosyltransferase 2A3 (UGT2A3) (Pongo abelii (Sumatran orangutan)).